The following is a 136-amino-acid chain: Small ribosomal subunit protein bS16 (136 aa).

Positions 113-122 (LALKSHRRSA) are enriched in basic residues. The disordered stretch occupies residues 113–136 (LALKSHRRSAKKEAEAKAATGGEA).

It belongs to the bacterial ribosomal protein bS16 family.

This chain is Small ribosomal subunit protein bS16, found in Pelodictyon phaeoclathratiforme (strain DSM 5477 / BU-1).